The following is a 2159-amino-acid chain: ATP-binding cassette sub-family A member 7 (2159 aa).

Residues 22–42 (PIQLLVELLWPLFLFFILVAV) traverse the membrane as a helical segment. At 43–546 (RHSHPPLEHH…DVFLRVLSRS (504 aa)) the chain is on the extracellular side. Cysteine 75 and cysteine 222 are joined by a disulfide. The N-linked (GlcNAc...) asparagine glycan is linked to asparagine 309. The next 6 membrane-spanning stretches (helical) occupy residues 547-567 (LPLF…KAVV), 590-610 (LGWF…LVLV), 623-643 (VVIF…SFLL), 652-672 (LAAA…VLCV), 678-698 (LHLG…GFGC), and 732-752 (AFLL…EAVC). In terms of domain architecture, ABC transporter 1 spans 804-1035 (VSIRGLKKHF…LGCGYYLTLV (232 aa)). 838 to 845 (GHNGAGKT) is a binding site for ATP. Residues 846-866 (TTLSILSGLFPPSSGSASILG) traverse the membrane as a helical segment. Disordered stretches follow at residues 1042–1088 (VTHD…GAVP) and 1172–1192 (GGDS…PTGP). Basic and acidic residues predominate over residues 1044 to 1061 (HDAKGDSEDPRREKKSDG). A compositionally biased stretch (polar residues) spans 1062-1081 (NGRTSDTAFTRGTSDKSNQA). Residues 1246–1266 (VVLPALFVGLALFFSLIVPPF) traverse the membrane as a helical segment. Residues 1267-1551 (GQYPPLQLSP…TLIASSVDVL (285 aa)) lie on the Extracellular side of the membrane. A disulfide bridge links cysteine 1359 with cysteine 1373. A run of 5 helical transmembrane segments spans residues 1552 to 1572 (VSIC…LVLI), 1598 to 1618 (FLWD…IFLA), 1635 to 1655 (LLLL…SFFF), 1663 to 1683 (VVLT…TFVL), and 1743 to 1763 (IIGK…LITL). One can recognise an ABC transporter 2 domain in the interval 1807–2039 (LVLRDLTKVY…FGAGHTLTLR (233 aa)). 1841-1848 (GVNGAGKT) is a binding site for ATP. The disordered stretch occupies residues 2118–2159 (QGEEEESSRQEAEEEEVSKPGRQHPKRVSRFLEDPSSVETMI). Positions 2119–2133 (GEEEESSRQEAEEEE) are enriched in acidic residues.

The protein belongs to the ABC transporter superfamily. ABCA family. N-glycosylated. Widely expressed with higher expression in brain, lung, adrenal gland, spleen and hematopoietic tissues (at protein level). In the brain, expressed in cortex, cerebellum, hippocampus, olfactory bulb, neurons, astrocytes and microglia (at protein level). Also expressed in adipocytes and macrophages (at protein level). Expressed in thymocytes (at protein level). Highly expressed in spleen and hematopoietic tissues. Expressed in brain, lung, macrophages, microglia, oligodendrocytes and neurons.

It localises to the cell membrane. Its subcellular location is the golgi apparatus membrane. The protein resides in the early endosome membrane. It is found in the cytoplasm. The protein localises to the cell projection. It localises to the ruffle membrane. Its subcellular location is the phagocytic cup. Its function is as follows. Probable ATP-binding cassette (ABC) transporter that plays a role in lipid homeostasis and macrophage-mediated phagocytosis. Binds APOA1 and may function in apolipoprotein-mediated phospholipid efflux from cells. May also mediate cholesterol efflux. May regulate cellular ceramide homeostasis during keratinocyte differentiation. Involved in lipid raft organization and CD1D localization on thymocytes and antigen-presenting cells, which plays an important role in natural killer T-cell development and activation. Plays a role in phagocytosis of apoptotic cells by macrophages. Macrophage phagocytosis is stimulated by APOA1 or APOA2, probably by stabilization of ABCA7. Also involved in phagocytic clearance of amyloid-beta by microglia cells and macrophages. Further limits amyloid-beta production by playing a role in the regulation of amyloid-beta A4 precursor protein (APP) endocytosis and/or processing. The protein is ATP-binding cassette sub-family A member 7 (Abca7) of Mus musculus (Mouse).